Here is a 270-residue protein sequence, read N- to C-terminus: Putative phosphoenolpyruvate synthase regulatory protein (270 aa).

Position 150–157 (150–157 (GVSRCGKT)) interacts with ADP.

It belongs to the pyruvate, phosphate/water dikinase regulatory protein family. PSRP subfamily.

It carries out the reaction [pyruvate, water dikinase] + ADP = [pyruvate, water dikinase]-phosphate + AMP + H(+). The catalysed reaction is [pyruvate, water dikinase]-phosphate + phosphate + H(+) = [pyruvate, water dikinase] + diphosphate. Functionally, bifunctional serine/threonine kinase and phosphorylase involved in the regulation of the phosphoenolpyruvate synthase (PEPS) by catalyzing its phosphorylation/dephosphorylation. This chain is Putative phosphoenolpyruvate synthase regulatory protein, found in Shewanella sediminis (strain HAW-EB3).